The chain runs to 331 residues: uncharacterized protein (331 aa).

The protein belongs to the IIV-6 335L family.

This is an uncharacterized protein from Invertebrate iridescent virus 6 (IIV-6).